Here is a 496-residue protein sequence, read N- to C-terminus: Flotillin-like protein 3 (496 aa).

The S-palmitoyl cysteine moiety is linked to residue C37. Positions 301 to 328 form a coiled coil; sequence VVREAELQLEVERKNALRLTEKLKAEKL.

This sequence belongs to the band 7/mec-2 family. Flotillin subfamily. May be palmitoylated.

The protein resides in the cell membrane. It is found in the membrane. The protein localises to the caveola. Functionally, may act as a scaffolding protein within caveolar membranes, functionally participating in formation of caveolae or caveolae-like vesicles. This Oryza sativa subsp. japonica (Rice) protein is Flotillin-like protein 3 (FLOT3).